The sequence spans 131 residues: MFRTLLKSKIHRAVVTHCELHYEGSCGIDEDLLDAANLCENEQIHVWNINNGERFVTYVIKAPRGSGIISLNGSAARRASAGDLVIIAAFAQVHEEQVPTHQPKLVFMDEANRIKELRSEPQNPPQTSPLR.

Residue S25 is the Schiff-base intermediate with substrate; via pyruvic acid of the active site. Position 25 is a pyruvic acid (Ser) (S25). Residue T57 coordinates substrate. The Proton donor role is filled by Y58. 73 to 75 (GSA) contributes to the substrate binding site.

This sequence belongs to the PanD family. As to quaternary structure, heterooctamer of four alpha and four beta subunits. The cofactor is pyruvate. Post-translationally, is synthesized initially as an inactive proenzyme, which is activated by self-cleavage at a specific serine bond to produce a beta-subunit with a hydroxyl group at its C-terminus and an alpha-subunit with a pyruvoyl group at its N-terminus.

Its subcellular location is the cytoplasm. It catalyses the reaction L-aspartate + H(+) = beta-alanine + CO2. Its pathway is cofactor biosynthesis; (R)-pantothenate biosynthesis; beta-alanine from L-aspartate: step 1/1. In terms of biological role, catalyzes the pyruvoyl-dependent decarboxylation of aspartate to produce beta-alanine. In Leptothrix cholodnii (strain ATCC 51168 / LMG 8142 / SP-6) (Leptothrix discophora (strain SP-6)), this protein is Aspartate 1-decarboxylase.